Consider the following 218-residue polypeptide: MMP 1-O-methyltransferase (218 aa).

S-adenosyl-L-methionine is bound by residues Phe20, Gly46, Ser52, Asp71, Gly75, and Ser124. Asp141 lines the Mg(2+) pocket. His144 (proton acceptor) is an active-site residue. Arg151 is an S-adenosyl-L-methionine binding site. Positions 169 and 170 each coordinate Mg(2+).

The protein belongs to the methyltransferase superfamily. Homodimer. Mg(2+) serves as cofactor.

It catalyses the reaction 3,3'-di-O-methyl-4alpha-mannobiose + S-adenosyl-L-methionine = 1,3,3'-tri-O-methyl-4alpha-mannobiose + S-adenosyl-L-homocysteine + H(+). With respect to regulation, inhibited by EDTA. In terms of biological role, involved in the biosynthesis of 3-O-methylmannose polysaccharides (MMP), which are intracellular polymethylated polysaccharides implicated in the modulation of fatty acid metabolism in non-tuberculous mycobacteria. Specifically methylates the 1-OH position of 3,3'-di-O-methyl-4alpha-mannobiose, a probable early precursor of MMP, yielding the reducing end dimannoside of MMP. The sequence is that of MMP 1-O-methyltransferase from Mycolicibacterium hassiacum (strain DSM 44199 / CIP 105218 / JCM 12690 / 3849) (Mycobacterium hassiacum).